The following is a 1058-amino-acid chain: Carbamoyl phosphate synthase pyrimidine-specific large chain (1058 aa).

A carboxyphosphate synthetic domain region spans residues 1-401; that stretch reads MPKRTDIHKI…ATLKAVRSLE (401 aa). Arg129, Arg169, Gly175, Gly176, Gln208, Ile210, Glu215, Gly241, Ile242, His243, Gln284, and Glu298 together coordinate ATP. Residues 133-327 form the ATP-grasp 1 domain; it reads KALMEELGEP…IAKMAAKIAV (195 aa). Mg(2+)-binding residues include Gln284, Glu298, and Asn300. Positions 284, 298, and 300 each coordinate Mn(2+). The oligomerization domain stretch occupies residues 402-546; the sequence is IGVHHVEEPA…YGTYEFENES (145 aa). Positions 547–929 are carbamoyl phosphate synthetic domain; sequence IVTKRPSVLV…ALYKAFEAAK (383 aa). The ATP-grasp 2 domain maps to 671-861; the sequence is DKVIKALAIP…MAQVATRAIL (191 aa). ATP-binding residues include Arg707, Ser746, Leu748, Glu752, Gly777, Val778, His779, Ser780, Gln820, and Glu832. Residues Gln820, Glu832, and Asn834 each contribute to the Mg(2+) site. Positions 820, 832, and 834 each coordinate Mn(2+). An MGS-like domain is found at 930–1058; it reads LHVPSHGNVL…ESQSFVTQAL (129 aa). The interval 930–1058 is allosteric domain; it reads LHVPSHGNVL…ESQSFVTQAL (129 aa).

It belongs to the CarB family. As to quaternary structure, composed of two chains; the small (or glutamine) chain promotes the hydrolysis of glutamine to ammonia, which is used by the large (or ammonia) chain to synthesize carbamoyl phosphate. Tetramer of heterodimers (alpha,beta)4. Mg(2+) serves as cofactor. Mn(2+) is required as a cofactor.

The enzyme catalyses hydrogencarbonate + L-glutamine + 2 ATP + H2O = carbamoyl phosphate + L-glutamate + 2 ADP + phosphate + 2 H(+). It catalyses the reaction hydrogencarbonate + NH4(+) + 2 ATP = carbamoyl phosphate + 2 ADP + phosphate + 2 H(+). It functions in the pathway amino-acid biosynthesis; L-arginine biosynthesis; carbamoyl phosphate from bicarbonate: step 1/1. Its pathway is pyrimidine metabolism; UMP biosynthesis via de novo pathway; (S)-dihydroorotate from bicarbonate: step 1/3. Functionally, small subunit of the glutamine-dependent carbamoyl phosphate synthetase (CPSase). CPSase catalyzes the formation of carbamoyl phosphate from the ammonia moiety of glutamine, carbonate, and phosphate donated by ATP, constituting the first step of the biosynthetic pathway leading to pyrimidine nucleotides. The large subunit (synthetase) binds the substrates ammonia (free or transferred from glutamine from the small subunit), hydrogencarbonate and ATP and carries out an ATP-coupled ligase reaction, activating hydrogencarbonate by forming carboxy phosphate which reacts with ammonia to form carbamoyl phosphate. The polypeptide is Carbamoyl phosphate synthase pyrimidine-specific large chain (pyrAB) (Lactiplantibacillus plantarum (strain ATCC BAA-793 / NCIMB 8826 / WCFS1) (Lactobacillus plantarum)).